The sequence spans 350 residues: tRNA uridine(34) hydroxylase (350 aa).

The region spanning 146–240 (DDPDAVFIDM…YARRAREQGL (95 aa)) is the Rhodanese domain. Cys-200 (cysteine persulfide intermediate) is an active-site residue. Residues 319-328 (RRRRAGRENG) are compositionally biased toward basic and acidic residues. The tract at residues 319–350 (RRRRAGRENGNKIFNKSRGRLNSKLSIPDPAE) is disordered.

This sequence belongs to the TrhO family.

It carries out the reaction uridine(34) in tRNA + AH2 + O2 = 5-hydroxyuridine(34) in tRNA + A + H2O. In terms of biological role, catalyzes oxygen-dependent 5-hydroxyuridine (ho5U) modification at position 34 in tRNAs. This Salmonella dublin (strain CT_02021853) protein is tRNA uridine(34) hydroxylase.